Consider the following 217-residue polypeptide: Ras-related protein RIC2 (217 aa).

Residues 21–28, 69–73, and 127–130 each bind GTP; these read GDSGVGKS, DTAGQ, and NKSD. S-geranylgeranyl cysteine attachment occurs at residues cysteine 214 and cysteine 215.

The protein belongs to the small GTPase superfamily. Rab family.

Its subcellular location is the cell membrane. In terms of biological role, possesses GTPase activity. The protein is Ras-related protein RIC2 (RIC2) of Oryza sativa subsp. japonica (Rice).